Reading from the N-terminus, the 26-residue chain is Halocyntin (26 aa).

In terms of biological role, has strong antibacterial activity against the Gram-positive bacteria M.luteus, S.aureus, B.megaterium, A.viridans and E.faecalis, and against the Gram-negative bacterium K.pneumoniae. Has less potent antibacterial activity against the Gram-negative bacteria E.coli DH5alpha, S.typhimurium, P.aeruginosa, E.aerogenes and N.gonorrhoeae. Has moderate hemolytic activity against sheep erythrocytes. The sequence is that of Halocyntin from Halocynthia papillosa (Red sea-squirt).